A 75-amino-acid polypeptide reads, in one-letter code: Cytochrome c oxidase subunit 6C (75 aa).

Residues 1–13 are Mitochondrial matrix-facing; the sequence is MAPEVLPKPRMRG. The chain crosses the membrane as a helical span at residues 14–54; the sequence is LLARRLRNHMAVAFVLSLGVAALYKFRVADQRKKAYADFYR. Over 55-75 the chain is Mitochondrial intermembrane; that stretch reads NYDVMKDFEEMRKAGIFQSVK.

This sequence belongs to the cytochrome c oxidase subunit 6c family. In terms of assembly, component of the cytochrome c oxidase (complex IV, CIV), a multisubunit enzyme composed of 14 subunits. The complex is composed of a catalytic core of 3 subunits MT-CO1, MT-CO2 and MT-CO3, encoded in the mitochondrial DNA, and 11 supernumerary subunits COX4I1 (or COX4I2), COX5A, COX5B, COX6A1 (or COX6A2), COX6B1 (or COX6B2), COX6C, COX7A2 (or COX7A1), COX7B, COX7C, COX8A and NDUFA4, which are encoded in the nuclear genome. The complex exists as a monomer or a dimer and forms supercomplexes (SCs) in the inner mitochondrial membrane with NADH-ubiquinone oxidoreductase (complex I, CI) and ubiquinol-cytochrome c oxidoreductase (cytochrome b-c1 complex, complex III, CIII), resulting in different assemblies (supercomplex SCI(1)III(2)IV(1) and megacomplex MCI(2)III(2)IV(2)).

It localises to the mitochondrion inner membrane. It participates in energy metabolism; oxidative phosphorylation. In terms of biological role, component of the cytochrome c oxidase, the last enzyme in the mitochondrial electron transport chain which drives oxidative phosphorylation. The respiratory chain contains 3 multisubunit complexes succinate dehydrogenase (complex II, CII), ubiquinol-cytochrome c oxidoreductase (cytochrome b-c1 complex, complex III, CIII) and cytochrome c oxidase (complex IV, CIV), that cooperate to transfer electrons derived from NADH and succinate to molecular oxygen, creating an electrochemical gradient over the inner membrane that drives transmembrane transport and the ATP synthase. Cytochrome c oxidase is the component of the respiratory chain that catalyzes the reduction of oxygen to water. Electrons originating from reduced cytochrome c in the intermembrane space (IMS) are transferred via the dinuclear copper A center (CU(A)) of subunit 2 and heme A of subunit 1 to the active site in subunit 1, a binuclear center (BNC) formed by heme A3 and copper B (CU(B)). The BNC reduces molecular oxygen to 2 water molecules using 4 electrons from cytochrome c in the IMS and 4 protons from the mitochondrial matrix. In Homo sapiens (Human), this protein is Cytochrome c oxidase subunit 6C (COX6C).